We begin with the raw amino-acid sequence, 142 residues long: Large ribosomal subunit protein uL11 (142 aa).

Belongs to the universal ribosomal protein uL11 family. In terms of assembly, part of the ribosomal stalk of the 50S ribosomal subunit. Interacts with L10 and the large rRNA to form the base of the stalk. L10 forms an elongated spine to which L12 dimers bind in a sequential fashion forming a multimeric L10(L12)X complex. In terms of processing, one or more lysine residues are methylated.

Its function is as follows. Forms part of the ribosomal stalk which helps the ribosome interact with GTP-bound translation factors. The protein is Large ribosomal subunit protein uL11 of Nitrobacter winogradskyi (strain ATCC 25391 / DSM 10237 / CIP 104748 / NCIMB 11846 / Nb-255).